Reading from the N-terminus, the 230-residue chain is TorCAD operon transcriptional regulatory protein TorR (230 aa).

Positions 4 to 117 constitute a Response regulatory domain; that stretch reads HIVIVEDEPV…ELVVRVKNLL (114 aa). A 4-aspartylphosphate modification is found at aspartate 53. A DNA-binding region (ompR/PhoB-type) is located at residues 132–227; sequence DNCYRFAGYC…QHGEGYFLAA (96 aa).

In terms of assembly, interacts with TorI. TorI binds to the effector domain of TorR. This interaction, which does not interfere with TorR DNA binding activity, probably prevents the recruitment of RNA polymerase to the torCAD promoter. Post-translationally, phosphorylated and dephosphorylated by TorS.

Its subcellular location is the cytoplasm. Its function is as follows. Member of the two-component regulatory system TorS/TorR involved in the anaerobic utilization of trimethylamine-N-oxide (TMAO). Phosphorylated TorR activates the transcription of the torCAD operon by binding to four decameric boxes located in the torCAD promoter. Box1, 2 and 4 contain the DNA sequence 5'-CTGTTCATAT-3' and box3 contains the DNA sequence 5'-CCGTTCATCC-3'. Phosphorylated as well as unphosphorylated TorR negatively regulates its own expression by binding to box1 and 2. The polypeptide is TorCAD operon transcriptional regulatory protein TorR (torR) (Escherichia coli (strain K12)).